The chain runs to 512 residues: Glycerol kinase (512 aa).

An ADP-binding site is contributed by T13. 3 residues coordinate ATP: T13, T14, and S15. T13 contacts sn-glycerol 3-phosphate. R17 lines the ADP pocket. R83, E84, Y135, and D252 together coordinate sn-glycerol 3-phosphate. Glycerol is bound by residues R83, E84, Y135, D252, and Q253. ADP is bound by residues T274 and G318. Residues T274, G318, Q322, and G419 each coordinate ATP. 2 residues coordinate ADP: G419 and N423.

It belongs to the FGGY kinase family.

The enzyme catalyses glycerol + ATP = sn-glycerol 3-phosphate + ADP + H(+). The protein operates within polyol metabolism; glycerol degradation via glycerol kinase pathway; sn-glycerol 3-phosphate from glycerol: step 1/1. Inhibited by fructose 1,6-bisphosphate (FBP). Key enzyme in the regulation of glycerol uptake and metabolism. Catalyzes the phosphorylation of glycerol to yield sn-glycerol 3-phosphate. The sequence is that of Glycerol kinase from Corynebacterium kroppenstedtii (strain DSM 44385 / JCM 11950 / CIP 105744 / CCUG 35717).